A 20-amino-acid polypeptide reads, in one-letter code: Acidic phospholipase A2 CbIbeta (20 aa).

Belongs to the phospholipase A2 family. Group II subfamily. D49 sub-subfamily. Heterodimer of an acidic subunit (CbIalpha or CbIbeta) and a basic subunit (CbII). The acidic subunit (CbI) is non-toxic, and increases the toxicity of the basic subunit (CbII). Ca(2+) is required as a cofactor. Contains 7 disulfide bonds. In terms of tissue distribution, expressed by the venom gland.

The protein resides in the secreted. It carries out the reaction a 1,2-diacyl-sn-glycero-3-phosphocholine + H2O = a 1-acyl-sn-glycero-3-phosphocholine + a fatty acid + H(+). Its function is as follows. Heterodimer: presynaptic neurotoxin. Monomer: Snake venom phospholipase A2 (PLA2) is inactive towards micellar phosphatidylcholine but is weakly active towards non-micellar dithiolecithin. PLA2 catalyzes the calcium-dependent hydrolysis of the 2-acyl groups in 3-sn-phosphoglycerides. This chain is Acidic phospholipase A2 CbIbeta, found in Pseudocerastes fieldi (Field's horned viper).